The following is a 472-amino-acid chain: Interferon-induced protein with tetratricopeptide repeats 2 (472 aa).

Ser2 is subject to N-acetylserine. 9 TPR repeats span residues 51-89, 90-135, 136-171, 172-208, 244-277, 278-333, 334-364, 365-403, and 404-445; these read ATMCNILAYVKHCRGLNEAALQCLGEAEGFIQQQHPDQV, EIRS…RIEN, PALDCEEGWARLKCTKNQNERVKVCFQKALEKDPKN, PEFTSGWAIAFYRLDDWPARNYCIDSLEQAIQLSPDN, IDTLLRAARFYCKVYDTDRAIQLLRKALEKLPNN, AYVH…MLEY, SCSFLADLYIIAKKYDEADYYFQKELSKDLP, PGPKQLLHLRYGNFQFFQMKRQDKAIYHYMEGVKIKKKT, and IPQK…GGQQ. The tract at residues 441 to 472 is disordered; sequence GGGQQADKDSERGVDSANQVPSASLDEDGAEY.

Belongs to the IFIT family. In terms of assembly, domain-swapped homodimer. Component of an interferon-dependent multiprotein complex, at least composed of IFIT1, IFIT2 and IFIT3. Interacts with IFIT1 and IFIT3. Interacts with STING1/MITA and disrupts its interaction with MAVS or TBK1. Interacts with EIF3C.

Its subcellular location is the cytoplasm. It is found in the endoplasmic reticulum. Its function is as follows. IFN-induced antiviral protein which inhibits expression of viral messenger RNAs lacking 2'-O-methylation of the 5' cap. The ribose 2'-O-methylation would provide a molecular signature to distinguish between self and non-self mRNAs by the host during viral infection. Viruses evolved several ways to evade this restriction system such as encoding their own 2'-O-methylase for their mRNAs or by stealing host cap containing the 2'-O-methylation (cap snatching mechanism). Binds AU-rich viral RNAs, with or without 5' triphosphorylation, RNA-binding is required for antiviral activity. Can promote apoptosis. This chain is Interferon-induced protein with tetratricopeptide repeats 2 (Ifit2), found in Mus musculus (Mouse).